The following is a 432-amino-acid chain: 3-phosphoshikimate 1-carboxyvinyltransferase (432 aa).

3 residues coordinate 3-phosphoshikimate: Lys23, Ser24, and Arg28. Lys23 provides a ligand contact to phosphoenolpyruvate. The phosphoenolpyruvate site is built by Gly95 and Arg123. Residues Ser167, Gln169, Asp317, and Lys344 each coordinate 3-phosphoshikimate. Residue Gln169 participates in phosphoenolpyruvate binding. The active-site Proton acceptor is the Asp317. Residues Arg348 and Arg390 each contribute to the phosphoenolpyruvate site.

It belongs to the EPSP synthase family. In terms of assembly, monomer.

It is found in the cytoplasm. The enzyme catalyses 3-phosphoshikimate + phosphoenolpyruvate = 5-O-(1-carboxyvinyl)-3-phosphoshikimate + phosphate. The protein operates within metabolic intermediate biosynthesis; chorismate biosynthesis; chorismate from D-erythrose 4-phosphate and phosphoenolpyruvate: step 6/7. Catalyzes the transfer of the enolpyruvyl moiety of phosphoenolpyruvate (PEP) to the 5-hydroxyl of shikimate-3-phosphate (S3P) to produce enolpyruvyl shikimate-3-phosphate and inorganic phosphate. The chain is 3-phosphoshikimate 1-carboxyvinyltransferase from Staphylococcus haemolyticus (strain JCSC1435).